The sequence spans 1576 residues: DExH-box ATP-dependent RNA helicase DExH2 (1576 aa).

Residues 15 to 78 form the R3H domain; sequence EATGAWATKV…ERRLSLFKGD (64 aa). Positions 227–396 constitute a Helicase ATP-binding domain; it reads ISAVESNQVV…FGGCPVVRVP (170 aa). An ATP-binding site is contributed by 240 to 247; it reads GETGCGKT. Residues 343 to 346 carry the DEIH box motif; it reads DEIH. Residues 561–735 enclose the Helicase C-terminal domain; the sequence is LIVKLMKKIC…ELCLQVKMLD (175 aa). Disordered regions lie at residues 1137 to 1165, 1177 to 1223, and 1260 to 1576; these read ATSP…MGSK, MEES…SLNN, and DMGN…PSDQ. The span at 1281–1301 shows a compositional bias: polar residues; it reads PNSANSMDLGNMEENTPSDLA. The span at 1305–1319 shows a compositional bias: basic and acidic residues; it reads KKKEPKSVSKLDLGS. The short motif at 1349–1360 is the PH1 element; sequence KQPEKKRSRSKK. The span at 1352 to 1363 shows a compositional bias: basic residues; it reads EKKRSRSKKRKS. The segment covering 1381 to 1412 has biased composition (polar residues); the sequence is ANENEQTEPKSANNLDLGNMKENTPSDLANEN. Positions 1454–1465 match the PH2 motif; that stretch reads KQPKKKRSRSKK. A compositionally biased stretch (basic residues) spans 1455–1467; it reads QPKKKRSRSKKCK. Basic and acidic residues predominate over residues 1490 to 1508; that stretch reads EQKDPESVNRLDPGKEKES. Residues 1509–1524 show a composition bias toward polar residues; that stretch reads IPSNLVSGNEQPDSNT. Residues 1528-1537 show a composition bias toward basic residues; that stretch reads KKPKKKKRKL. Residues 1530–1537 carry the Nuclear localization signal motif; sequence PKKKKRKL. Residues 1540-1562 show a composition bias toward polar residues; it reads NFDSVNNMEEKMPSTNVLSQGNK.

It belongs to the DExH box helicase family. Homodimer.

It is found in the nucleus. It catalyses the reaction ATP + H2O = ADP + phosphate + H(+). Its function is as follows. May function as an ATP-dependent RNA/DNA helicase. Binds DNA in vitro in a non-specific manner. This is DExH-box ATP-dependent RNA helicase DExH2 from Arabidopsis thaliana (Mouse-ear cress).